The primary structure comprises 311 residues: Class E basic helix-loop-helix protein 22 (311 aa).

Residues 22 to 170 (AKRMESAFRS…GGSKKSKEQK (149 aa)) form a disordered region. Residues 81 to 96 (GESASRSSVAESSGGE) show a composition bias toward low complexity. A compositionally biased stretch (gly residues) spans 125 to 147 (AGGGGGGGGGGGGGPGGGGGGGL). In terms of domain architecture, bHLH spans 171–225 (ALRLNINARERRRMHDLNDALDELRAVIPYAHSPSVRKLSKIATLLLAKNYILMQ).

Its subcellular location is the nucleus. May act as a transcriptional repressor. This Gallus gallus (Chicken) protein is Class E basic helix-loop-helix protein 22 (BHLHE22).